Here is a 346-residue protein sequence, read N- to C-terminus: Anthranilate phosphoribosyltransferase (346 aa).

5-phospho-alpha-D-ribose 1-diphosphate contacts are provided by residues Gly-80, 83–84 (GD), Thr-88, 90–93 (NIST), 108–116 (KHGNTAVSS), and Ser-120. Gly-80 lines the anthranilate pocket. Residue Ser-92 coordinates Mg(2+). Residue Asn-111 participates in anthranilate binding. Arg-166 contacts anthranilate. Positions 225 and 226 each coordinate Mg(2+).

This sequence belongs to the anthranilate phosphoribosyltransferase family. In terms of assembly, homodimer. It depends on Mg(2+) as a cofactor.

It catalyses the reaction N-(5-phospho-beta-D-ribosyl)anthranilate + diphosphate = 5-phospho-alpha-D-ribose 1-diphosphate + anthranilate. It participates in amino-acid biosynthesis; L-tryptophan biosynthesis; L-tryptophan from chorismate: step 2/5. Its function is as follows. Catalyzes the transfer of the phosphoribosyl group of 5-phosphorylribose-1-pyrophosphate (PRPP) to anthranilate to yield N-(5'-phosphoribosyl)-anthranilate (PRA). This is Anthranilate phosphoribosyltransferase from Desulforudis audaxviator (strain MP104C).